Here is a 129-residue protein sequence, read N- to C-terminus: uncharacterized protein (129 aa).

Belongs to the asfivirus C129R family.

Its subcellular location is the virion. In terms of biological role, plays a role in the inhibition of type I interferon signaling pathway. Mechanistically, specifically interacts with 2',3'-cGAMP and cleaves it via its phosphodiesterase activity. In turn, prevents 2',3'-cGAMP interaction with host ER-resident STING1 leading to inhibition of downstream signaling pathway and type I interferon production. This is an uncharacterized protein from African swine fever virus (isolate Pig/Kenya/KEN-50/1950) (ASFV).